The sequence spans 506 residues: Plant intracellular Ras-group-related LRR protein 1 (506 aa).

The segment at Thr-24–His-48 is disordered. A coiled-coil region spans residues Lys-143–Glu-193. 10 LRR repeats span residues Glu-203–Lys-225, Ile-226–Leu-249, Asn-251–Leu-272, Ser-273–Cys-295, Ser-297–Leu-319, Val-320–Met-342, Ser-344–Leu-364, Leu-365–Asp-389, Leu-390–Thr-412, and Val-414–Gln-436. Residues Gly-437–Trp-449 carry the GVYW motif.

It belongs to the SHOC2 family. In terms of tissue distribution, widely expressed.

In terms of biological role, leucine-rich repeat protein that likely mediates protein interactions, possibly in the context of signal transduction. PIRL1 acts redundantly with PIRL9 in the differentiation of microspores into pollen. The sequence is that of Plant intracellular Ras-group-related LRR protein 1 (PIRL1) from Arabidopsis thaliana (Mouse-ear cress).